A 569-amino-acid chain; its full sequence is Urease subunit alpha (569 aa).

In terms of domain architecture, Urease spans 131–569; the sequence is GGMDAHIHYI…LPMAQRYFLF (439 aa). Histidine 136, histidine 138, and lysine 218 together coordinate Ni(2+). At lysine 218 the chain carries N6-carboxylysine. Histidine 220 is a substrate binding site. Residues histidine 247 and histidine 273 each contribute to the Ni(2+) site. Histidine 321 serves as the catalytic Proton donor. Aspartate 361 contacts Ni(2+).

This sequence belongs to the metallo-dependent hydrolases superfamily. Urease alpha subunit family. Heterotrimer of UreA (gamma), UreB (beta) and UreC (alpha) subunits. Three heterotrimers associate to form the active enzyme. Ni cation is required as a cofactor. In terms of processing, carboxylation allows a single lysine to coordinate two nickel ions.

The protein localises to the cytoplasm. The catalysed reaction is urea + 2 H2O + H(+) = hydrogencarbonate + 2 NH4(+). It functions in the pathway nitrogen metabolism; urea degradation; CO(2) and NH(3) from urea (urease route): step 1/1. This chain is Urease subunit alpha, found in Agrobacterium fabrum (strain C58 / ATCC 33970) (Agrobacterium tumefaciens (strain C58)).